Here is a 211-residue protein sequence, read N- to C-terminus: Urease accessory protein UreG (211 aa).

Residue 11 to 18 (GPVGAGKT) participates in GTP binding.

This sequence belongs to the SIMIBI class G3E GTPase family. UreG subfamily. Homodimer. UreD, UreF and UreG form a complex that acts as a GTP-hydrolysis-dependent molecular chaperone, activating the urease apoprotein by helping to assemble the nickel containing metallocenter of UreC. The UreE protein probably delivers the nickel.

It localises to the cytoplasm. Functionally, facilitates the functional incorporation of the urease nickel metallocenter. This process requires GTP hydrolysis, probably effectuated by UreG. This Actinobacillus pleuropneumoniae serotype 3 (strain JL03) protein is Urease accessory protein UreG.